The following is a 252-amino-acid chain: 3-deoxy-manno-octulosonate cytidylyltransferase (252 aa).

Belongs to the KdsB family.

It localises to the cytoplasm. The enzyme catalyses 3-deoxy-alpha-D-manno-oct-2-ulosonate + CTP = CMP-3-deoxy-beta-D-manno-octulosonate + diphosphate. It functions in the pathway nucleotide-sugar biosynthesis; CMP-3-deoxy-D-manno-octulosonate biosynthesis; CMP-3-deoxy-D-manno-octulosonate from 3-deoxy-D-manno-octulosonate and CTP: step 1/1. It participates in bacterial outer membrane biogenesis; lipopolysaccharide biosynthesis. Its function is as follows. Activates KDO (a required 8-carbon sugar) for incorporation into bacterial lipopolysaccharide in Gram-negative bacteria. The sequence is that of 3-deoxy-manno-octulosonate cytidylyltransferase from Vibrio campbellii (strain ATCC BAA-1116).